The sequence spans 533 residues: Putative amidase C550.07 (533 aa).

Residues K132 and S207 each act as charge relay system in the active site. The active-site Acyl-ester intermediate is the S231.

This sequence belongs to the amidase family.

It localises to the cytoplasm. Its subcellular location is the nucleus. The enzyme catalyses a monocarboxylic acid amide + H2O = a monocarboxylate + NH4(+). In Schizosaccharomyces pombe (strain 972 / ATCC 24843) (Fission yeast), this protein is Putative amidase C550.07.